We begin with the raw amino-acid sequence, 461 residues long: GTPase Der (461 aa).

2 EngA-type G domains span residues 25–188 (PVVA…PNVA) and 198–371 (RRVA…ASWD). GTP is bound by residues 31–38 (GRPNVGKS), 78–82 (DTGGW), 140–143 (NKVD), 204–211 (GKPNVGKS), 251–255 (DTAGL), and 316–319 (NKWD). The region spanning 372–454 (TRIATGPLNI…PIRINVRVRE (83 aa)) is the KH-like domain.

This sequence belongs to the TRAFAC class TrmE-Era-EngA-EngB-Septin-like GTPase superfamily. EngA (Der) GTPase family. As to quaternary structure, associates with the 50S ribosomal subunit.

Its function is as follows. GTPase that plays an essential role in the late steps of ribosome biogenesis. This Mycobacterium leprae (strain TN) protein is GTPase Der.